Reading from the N-terminus, the 459-residue chain is MSWSILTLLRDNPELLKEHVKKRFMDPSLVDEAYKLDLEWRRLLSQVQELRHRHNVISRDISKLPEPERSARINEARELLSQMEELEKKLKEIEDLREEALLKLPNIVHETVPVGPDDTYNVPIRFWGKPKVWSGYIEQFMQQTERYGFKVEYELVNWKPVGHADMLEYVLRLGDTVKAGEVAGSRFYYLFDDIVFLDIALLMYAIDSLTSKGYKLVLPPYMLRHKVMSGVIDLATFKDAIYKIEGEDLYLIATAEHSLAALHAFEEIPEEELPLKYVGVSPCFRKEAGAGNRDLKGIFRVHQFHKVEQYVYAKPEESWALMEELIGNAEDLFKGLELPYRVVNIASGDLGAPAAKKYDLETWMPAQGLFREMVSCSNTTDWQSYRLKTRLVRRKGMVKEYVHTLNSTAIASTRTITSILENRQNEDGTVTVPRVLRKYLEVFNKAPRDYIHPVKRERA.

L-serine is bound at residue 254-256 (TAE). ATP contacts are provided by residues 285 to 287 (RKE) and Val-301. Position 308 (Glu-308) interacts with L-serine. ATP is bound at residue 372 to 375 (EMVS). L-serine is bound at residue Thr-408.

The protein belongs to the class-II aminoacyl-tRNA synthetase family. Type-1 seryl-tRNA synthetase subfamily. Homodimer. The tRNA molecule binds across the dimer.

The protein resides in the cytoplasm. The catalysed reaction is tRNA(Ser) + L-serine + ATP = L-seryl-tRNA(Ser) + AMP + diphosphate + H(+). The enzyme catalyses tRNA(Sec) + L-serine + ATP = L-seryl-tRNA(Sec) + AMP + diphosphate + H(+). The protein operates within aminoacyl-tRNA biosynthesis; selenocysteinyl-tRNA(Sec) biosynthesis; L-seryl-tRNA(Sec) from L-serine and tRNA(Sec): step 1/1. Catalyzes the attachment of serine to tRNA(Ser). Is also able to aminoacylate tRNA(Sec) with serine, to form the misacylated tRNA L-seryl-tRNA(Sec), which will be further converted into selenocysteinyl-tRNA(Sec). The sequence is that of Serine--tRNA ligase from Desulfurococcus amylolyticus (strain DSM 18924 / JCM 16383 / VKM B-2413 / 1221n) (Desulfurococcus kamchatkensis).